Reading from the N-terminus, the 85-residue chain is MASKKSGGSAKNGRDSFSKRLGVKRYDGQVVKAGNILVRQRGTKIYPGKNVGLGNDYTLFALIDGKVKFETSKGKKVVSVYPLDA.

Belongs to the bacterial ribosomal protein bL27 family.

The sequence is that of Large ribosomal subunit protein bL27 from Persephonella marina (strain DSM 14350 / EX-H1).